Reading from the N-terminus, the 221-residue chain is MEDSPLPDLRDIELKLGRKVPESLARSLRGEELAPREGAADPSGVGGSCSSSSSCSSFAPSVSSSSSSSPASGSPRRSHPSALERLETKLHILRQEMVNLRATDVRLMRQLLLINESIESIKWMIEEKATITSRGSSLSGSLCSLLESQSTSLRGSYNSLHDGSDGLDGISVGSYLDTLADDVPGHQTPSDLDQFSDSSIIEDSQALHKHPKLDSEYYCFG.

The residue at position 1 (Met-1) is an N-acetylmethionine. Positions 24–81 (LARSLRGEELAPREGAADPSGVGGSCSSSSSCSSFAPSVSSSSSSSPASGSPRRSHPS) are disordered. Basic and acidic residues predominate over residues 28-39 (LRGEELAPREGA). Residues 48–75 (SCSSSSSCSSFAPSVSSSSSSSPASGSP) are compositionally biased toward low complexity.

The protein is Leucine rich adaptor protein 1-like (Lurap1l) of Mus musculus (Mouse).